A 99-amino-acid chain; its full sequence is Ferredoxin, vegetative (99 aa).

Positions 4 to 96 (YQVRLINKKR…DCTIRTHQEP (93 aa)) constitute a 2Fe-2S ferredoxin-type domain. [2Fe-2S] cluster contacts are provided by Cys-42, Cys-47, Cys-50, and Cys-80.

This sequence belongs to the 2Fe2S plant-type ferredoxin family. Requires [2Fe-2S] cluster as cofactor.

In terms of biological role, ferredoxins are iron-sulfur proteins that transfer electrons in a wide variety of metabolic reactions. Donates electrons to the nitrogenase 2. The protein is Ferredoxin, vegetative (fdxH2) of Trichormus variabilis (strain ATCC 29413 / PCC 7937) (Anabaena variabilis).